A 295-amino-acid polypeptide reads, in one-letter code: Beta-chimaerin (295 aa).

The Phorbol-ester/DAG-type zinc finger occupies 41-91 (THNFKVHTFRGPHWCEYCANFMWGLIAQGVRCSDCGLNVHKQCSKHVPNDC). The Rho-GAP domain maps to 104–295 (CDLTTLVKAH…ILIENEDVLF (192 aa)).

As to expression, found in cerebellum and testis.

The protein resides in the membrane. Its activity is regulated as follows. In the inactive state, the N terminus protrudes into the active site of the Rho-GAP domain, sterically blocking Rac binding. Phospholipid binding to the Phorbol-ester/DAG-type zinc-finger/C1 domain triggers the cooperative dissociation of these interactions, allowing the N-terminus to move out of the active site and thereby activating the enzyme. Functionally, GTPase-activating protein for p21-rac. The protein is Beta-chimaerin (Chn2) of Rattus norvegicus (Rat).